A 90-amino-acid polypeptide reads, in one-letter code: Mitochondrial import inner membrane translocase subunit Tim10 (90 aa).

Positions 29–54 match the Twin CX3C motif motif; the sequence is CHRKCVPPHYKEAELSKGESVCLDRC. 2 disulfides stabilise this stretch: Cys29/Cys54 and Cys33/Cys50.

Belongs to the small Tim family. As to quaternary structure, heterohexamer; composed of 3 copies of TIMM9 and 3 copies of TIMM10/TIM10A, named soluble 70 kDa complex. The complex forms a 6-bladed alpha-propeller structure and associates with the TIMM22 component of the TIM22 complex. Interacts with multi-pass transmembrane proteins in transit. Also forms a complex composed of TIMM9, TIMM10/TIM10A and FXC1/TIM10B.

It is found in the mitochondrion inner membrane. Functionally, mitochondrial intermembrane chaperone that participates in the import and insertion of multi-pass transmembrane proteins into the mitochondrial inner membrane. May also be required for the transfer of beta-barrel precursors from the TOM complex to the sorting and assembly machinery (SAM complex) of the outer membrane. Acts as a chaperone-like protein that protects the hydrophobic precursors from aggregation and guide them through the mitochondrial intermembrane space. The chain is Mitochondrial import inner membrane translocase subunit Tim10 (TIMM10) from Bos taurus (Bovine).